A 346-amino-acid chain; its full sequence is Heat-inducible transcription repressor HrcA (346 aa).

Belongs to the HrcA family.

Its function is as follows. Negative regulator of class I heat shock genes (grpE-dnaK-dnaJ and groELS operons). Prevents heat-shock induction of these operons. This Erythrobacter litoralis (strain HTCC2594) protein is Heat-inducible transcription repressor HrcA.